The primary structure comprises 120 residues: NAD(P)H-quinone oxidoreductase subunit 3, chloroplastic (120 aa).

Transmembrane regions (helical) follow at residues 7–27 (YDTF…AFSI), 64–84 (MFAL…PWAM), and 88–108 (ILGL…IVGL).

This sequence belongs to the complex I subunit 3 family. As to quaternary structure, NDH is composed of at least 16 different subunits, 5 of which are encoded in the nucleus.

It localises to the plastid. It is found in the chloroplast thylakoid membrane. It carries out the reaction a plastoquinone + NADH + (n+1) H(+)(in) = a plastoquinol + NAD(+) + n H(+)(out). It catalyses the reaction a plastoquinone + NADPH + (n+1) H(+)(in) = a plastoquinol + NADP(+) + n H(+)(out). Its function is as follows. NDH shuttles electrons from NAD(P)H:plastoquinone, via FMN and iron-sulfur (Fe-S) centers, to quinones in the photosynthetic chain and possibly in a chloroplast respiratory chain. The immediate electron acceptor for the enzyme in this species is believed to be plastoquinone. Couples the redox reaction to proton translocation, and thus conserves the redox energy in a proton gradient. This Cryptomeria japonica (Japanese cedar) protein is NAD(P)H-quinone oxidoreductase subunit 3, chloroplastic.